Here is a 5478-residue protein sequence, read N- to C-terminus: MLVIWILTLALRLCASVTTVTPEGSAVHKAISQQGTLWTGEVLEKQTVEQGKSTLRRQKNHFHRSAGELRCRNALKDEGASAGWSVMFAGESVVVLVHLWMTGARVKNLGLVEFASPGDDGDGRAEGFSLGLPLSEQARAAGAREKERQETVINHSTFSGFSQITGSTVNTSIGGNTTSASTPSSSDPFTTFSDYGVSVTFITGSTATKHFLDSSTNSGHSEESTVSHSGPGATGTTLFPSHSATSVFVGEPKTSPITSASMETTALPGSTTTAGLSEKSTTFYSSPRSPDRTLSPARTTSSGVSEKSTTSHSRPGPTHTIAFPDSTTMPGVSQESTASHSIPGSTDTTLSPGTTTPSSLGPESTTFHSSPGYTKTTRLPDNTTTSGLLEASTPVHSSTGSPHTTLSPSSSTTHEGEPTTFQSWPSSKDTSPAPSGTTSAFVKLSTTYHSSPSSTPTTHFSASSTTLGHSEESTPVHSSPVATATTPPPARSATSGHVEESTAYHRSPGSTQTMHFPESSTTSGHSEESATFHGSTTHTKSSTPSTTAALAHTSYHSSLGSTETTHFRDSSTISGRSEESKASHSSPDAMATTVLPAGSTPSVLVGDSTPSPISSGSMETTALPGSTTKPGLSEKSTTFYSSPRSPDTTHLPASMTSSGVSEESTTSHSRPGSTHTTAFPGSTTMPGLSQESTASHSSPGPTDTTLSPGSTTASSLGPEYTTFHSRPGSTETTLLPDNTTASGLLEASMPVHSSTRSPHTTLSPAGSTTRQGESTTFHSWPSSKDTRPAPPTTTSAFVEPSTTSHGSPSSIPTTHISARSTTSGLVEESTTYHSSPGSTQTMHFPESDTTSGRGEESTTSHSSTTHTISSAPSTTSALVEEPTSYHSSPGSTATTHFPDSSTTSGRSEESTASHSSQDATGTIVLPARSTTSVLLGESTTSPISSGSMETTALPGSTTTPGLSERSTTFHSSPRSPATTLSPASTTSSGVSEESTTSRSRPGSTHTTAFPDSTTTPGLSRHSTTSHSSPGSTDTTLLPASTTTSGPSQESTTSHSSSGSTDTALSPGSTTALSFGQESTTFHSNPGSTHTTLFPDSTTSSGIVEASTRVHSSTGSPRTTLSPASSTSPGLQGESTAFQTHPASTHTTPSPPSTATAPVEESTTYHRSPGSTPTTHFPASSTTSGHSEKSTIFHSSPDASGTTPSSAHSTTSGRGESTTSRISPGSTEITTLPGSTTTPGLSEASTTFYSSPRSPTTTLSPASMTSLGVGEESTTSRSQPGSTHSTVSPASTTTPGLSEESTTVYSSSRGSTETTVFPHSTTTSVHGEEPTTFHSRPASTHTTLFTEDSTTSGLTEESTAFPGSPASTQTGLPATLTTADLGEESTTFPSSSGSTGTKLSPARSTTSGLVGESTPSRLSPSSTETTTLPGSPTTPSLSEKSTTFYTSPRSPDATLSPATTTSSGVSEESSTSHSQPGSTHTTAFPDSTTTSDLSQEPTTSHSSQGSTEATLSPGSTTASSLGQQSTTFHSSPGDTETTLLPDDTITSGLVEASTPTHSSTGSLHTTLTPASSTSAGLQEESTTFQSWPSSSDTTPSPPGTTAAPVEVSTTYHSRPSSTPTTHFSASSTTLGRSEESTTVHSSPGATGTALFPTRSATSVLVGEPTTSPISSGSTETTALPGSTTTAGLSEKSTTFYSSPRSPDTTLSPASTTSSGVSEESTTSHSRPGSTHTTAFPGSTTMPGVSQESTASHSSPGSTDTTLSPGSTTASSLGPESTTFHSSPGSTETTLLPDNTTASGLLEASTPVHSSTGSPHTTLSPAGSTTRQGESTTFQSWPSSKDTMPAPPTTTSAFVELSTTSHGSPSSTPTTHFSASSTTLGRSEESTTVHSSPVATATTPSPARSTTSGLVEESTAYHSSPGSTQTMHFPESSTASGRSEESRTSHSSTTHTISSPPSTTSALVEEPTSYHSSPGSTATTHFPDSSTTSGRSEESTASHSSQDATGTIVLPARSTTSVLLGESTTSPISSGSMETTALPGSTTTPGLSEKSTTFHSSPRSPATTLSPASTTSSGVSEESTTSHSRPGSTHTTAFPDSTTTPGLSRHSTTSHSSPGSTDTTLLPASTTTSGPSQESTTSHSSPGSTDTALSPGSTTALSFGQESTTFHSSPGSTHTTLFPDSTTSSGIVEASTRVHSSTGSPRTTLSPASSTSPGLQGESTAFQTHPASTHTTPSPPSTATAPVEESTTYHRSPGSTPTTHFPASSTTSGHSEKSTIFHSSPDASGTTPSSAHSTTSGRGESTTSRISPGSTEITTLPGSTTTPGLSEASTTFYSSPRSPTTTLSPASMTSLGVGEESTTSRSQPGSTHSTVSPASTTTPGLSEESTTVYSSSPGSTETTVFPRTPTTSVRGEEPTTFHSRPASTHTTLFTEDSTTSGLTEESTAFPGSPASTQTGLPATLTTADLGEESTTFPSSSGSTGTTLSPARSTTSGLVGESTPSRLSPSSTETTTLPGSPTTPSLSEKSTTFYTSPRSPDATLSPATTTSSGVSEESSTSHSQPGSTHTTAFPDSTTTPGLSRHSTTSHSSPGSTDTTLLPASTTTSGPSQESTTSHSSPGSTDTALSPGSTTALSFGQESTTFHSSPGSTHTTLFPDSTTSSGIVEASTRVHSSTGSPRTTLSPASSTSPGLQGESTTFQTHPASTHTTPSPPSTATAPVEESTTYHRSPGSTPTTHFPASSTTSGHSEKSTIFHSSPDASGTTPSSAHSTTSGRGESTTSRISPGSTEITTLPGSTTTPGLSEASTTFYSSPRSPTTTLSPASMTSLGVGEESTTSRSQPGSTHSTVSPASTTTPGLSEESTTVYSSSPGSTETTVFPRSTTTSVRGEEPTTFHSRPASTHTTLFTEDSTTSGLTEESTAFPGSPASTQTGLPATLTTADLGEESTTFPSSSGSTGTTLSPARSTTSGLVGESTPSRLSPSSTETTTLPGSPTTPSLSEKSTTFYTSPRSPDATLSPATTTSSGVSEESSTSHSQPGSTHTTAFPDSTTTSGLSQEPTASHSSQGSTEATLSPGSTTASSLGQQSTTFHSSPGDTETTLLPDDTITSGLVEASTPTHSSTGSLHTTLTPASSTSAGLQEESTTFQSWPSSSDTTPSPPGTTAAPVEVSTTYHSRPSSTPTTHFSASSTTLGRSEESTTVHSSPGATGTALFPTRSATSVLVGEPTTSPISSGSTETTALPGSTTTAGLSEKSTTFYSSPRSPDTTLSPASTTSSGVSEESTTSHSRPGSTHTTAFPGSTTMPGVSQESTASHSSPGSTDTTLSPGSTTASSLGPESTTFHSGPGSTETTLLPDNTTASGLLEASTPVHSSTGSPHTTLSPAGSTTRQGESTTFQSWPNSKDTTPAPPTTTSAFVELSTTSHGSPSSTPTTHFSASSTTLGRSEESTTVHSSPVATATTPSPARSTTSGLVEESTTYHSSPGSTQTMHFPESDTTSGRGEESTTSHSSTTHTISSAPSTTSALVEEPTSYHSSPGSTATTHFPDSSTTSGRSEESTASHSSQDATGTIVLPARSTTSVLLGESTTSPISSGSMETTALPGSTTTPGLSEKSTTFHSSPRSPATTLSPASTTSSGVSEESTTSHSRPGSTHTTAFPDSTTTPGLSRHSTTSHSSPGSTDTTLLPASTTTSGSSQESTTSHSSSGSTDTALSPGSTTALSFGQESTTFHSSPGSTHTTLFPDSTTSSGIVEASTRVHSSTGSPRTTLSPASSTSPGLQGESTAFQTHPASTHTTPSPPSTATAPVEESTTYHRSPGSTPTTHFPASSTTSGHSEKSTIFHSSPDASGTTPSSAHSTTSGRGESTTSRISPGSTEITTLPGSTTTPGLSEASTTFYSSPRSPTTTLSPASMTSLGVGEESTTSRSQPGSTHSTVSPASTTTPGLSEESTTVYSSSPGSTETTVFPRSTTTSVRREEPTTFHSRPASTHTTLFTEDSTTSGLTEESTAFPGSPASTQTGLPATLTTADLGEESTTFPSSSGSTGTKLSPARSTTSGLVGESTPSRLSPSSTETTTLPGSPTTPSLSEKSTTFYTSPRSPDATLSPATTTSSGVSEESSTSHSQPGSTHTTAFPDSTTTSGLSQEPTTSHSSQGSTEATLSPGSTTASSLGQQSTTFHSSPGDTETTLLPDDTITSGLVEASTPTHSSTGSLHTTLTPASSTSTGLQEESTTFQSWPSSSDTTPSPPSTTAVPVEVSTTYHSRPSSTPTTHFSASSTTLGRSEESTTVHSSPGATGTALFPTRSATSVLVGEPTTSPISSGSTETTALPGSTTTAGLSEKSTTFYSSPRSPDTTLSPASTTSSGVSEESTTSHSRPGSMHTTAFPSSTTMPGVSQESTASHSSPGSTDTTLSPGSTTASSLGPESTTFHSSPGSTETTLLPDNTTASGLLEASTPVHSSTGSPHTTLSPAGSTTRQGESTTFQSWPNSKDTTPAPPTTTSAFVELSTTSHGSPSSTPTTHFSASSTTLGRSEESTTVHSSPVATATTPSPARSTTSGLVEESTTYHSSPGSTQTMHFPESNTTSGRGEESTTSHSSTTHTISSAPSTTSALVEEPTSYHSSPGSTATTHFPDSSTTSGRSEESTASHSSQDATGTIVLPARSTTSVLLGESTTSPISSGSMETTALPGSTTTPGLSEKSTTFHSSPSSTPTTHFSASSTTLGRSEESTTVHSSPVATATTPSPARSTTSGLVEESTAYHSSPGSTQTMHFPESSTASGRSEESRTSHSSTTHTISSPPSTTSALVEEPTSYHSSPGSIATTHFPESSTTSGRSEESTASHSSPDTNGITPLPAHFTTSGRIAESTTFYISPGSMETTLASTATTPGLSAKSTILYSSSRSPDQTLSPASMTSSSISGEPTSLYSQAESTHTTAFPASTTTSGLSQESTTFHSKPGSTETTLSPGSITTSSFAQEFTTPHSQPGSALSTVSPASTTVPGLSEESTTFYSSPGSTETTAFSHSNTMSIHSQQSTPFPDSPGFTHTVLPATLTTTDIGQESTAFHSSSDATGTTPLPARSTASDLVGEPTTFYISPSPTYTTLFPASSSTSGLTEESTTFHTSPSFTSTIVSTESLETLAPGLCQEGQIWNGKQCVCPQGYVGYQCLSPLESFPVETPEKLNATLGMTVKVTYRNFTEKMNDASSQEYQNFSTLFKNRMDVVLKGDNLPQYRGVNIRRLLNGSIVVKNDVILEADYTLEYEELFENLAEIVKAKIMNETRTTLLDPDSCRKAILCYSEEDTFVDSSVTPGFDFQEQCTQKAAEGYTQFYYVDVLDGKLACVNKCTKGTKSQMNCNLGTCQLQRSGPRCLCPNTNTHWYWGETCEFNIAKSLVYGIVGAVMAVLLLALIILIILFSLSQRKRHREQYDVPQEWRKEGTPGIFQKTAIWEDQNLRESRFGLENAYNNFRPTLETVDSGTELHIQRPEMVASTV.

The N-terminal stretch at 1-16 (MLVIWILTLALRLCAS) is a signal peptide. The Extracellular portion of the chain corresponds to 17–5380 (VTTVTPEGSA…EFNIAKSLVY (5364 aa)). Residues N154, N170, and N176 are each glycosylated (N-linked (GlcNAc...) asparagine). Residues 212 to 737 (LDSSTNSGHS…GSTETTLLPD (526 aa)) form a disordered region. Residues 222-240 (EESTVSHSGPGATGTTLFP) form repeat 1. The segment at 222-4761 (EESTVSHSGP…PGSTQTMHFP (4540 aa)) is 28 X 19 AA approximate tandem repeats of E-E-S-X-X-X-H-X-X-P-X-X-T-X-T-X-X-X-P. 4 stretches are compositionally biased toward polar residues: residues 226-246 (VSHSGPGATGTTLFPSHSATS), 255-288 (SPITSASMETTALPGSTTTAGLSEKSTTFYSSPR), 296-313 (PARTTSSGVSEKSTTSHS), and 325-342 (DSTTMPGVSQESTASHSI). The segment covering 343–366 (PGSTDTTLSPGTTTPSSLGPESTT) has biased composition (low complexity). Residues 367–387 (FHSSPGYTKTTRLPDNTTTSG) are compositionally biased toward polar residues. Residue N382 is glycosylated (N-linked (GlcNAc...) asparagine). A compositionally biased stretch (low complexity) spans 396–413 (HSSTGSPHTTLSPSSSTT). Positions 419 to 440 (TTFQSWPSSKDTSPAPSGTTSA) are enriched in polar residues. 2 stretches are compositionally biased toward low complexity: residues 445–466 (STTYHSSPSSTPTTHFSASSTT) and 478–495 (SSPVATATTPPPARSATS). 2 tandem repeats follow at residues 471-489 (EESTPVHSSPVATATTPPP) and 499-517 (EESTAYHRSPGSTQTMHFP). Residues 531 to 554 (TFHGSTTHTKSSTPSTTAALAHTS) are compositionally biased toward low complexity. 2 stretches are compositionally biased toward polar residues: residues 555 to 575 (YHSSLGSTETTHFRDSSTISG) and 608 to 648 (STPS…SPDT). The span at 654–669 (SMTSSGVSEESTTSHS) shows a compositional bias: low complexity. The stretch at 662 to 680 (EESTTSHSRPGSTHTTAFP) is repeat 4. Polar residues-rich tracts occupy residues 670-715 (RPGS…TASS) and 722-737 (TFHSRPGSTETTLLPD). N-linked (GlcNAc...) asparagine glycosylation occurs at N738. Disordered stretches follow at residues 749–4847 (MPVH…HFTT), 4887–5034 (SSRS…THTV), 5048–5071 (STAFHSSSDATGTTPLPARSTASD), and 5093–5112 (ASSSTSGLTEESTTFHTSPS). Polar residues-rich tracts occupy residues 751–783 (VHSSTRSPHTTLSPAGSTTRQGESTTFHSWPSS) and 792–842 (TTTS…TQTM). Repeat unit 5 spans residues 827–845 (EESTTYHSSPGSTQTMHFP). The segment covering 859–877 (TSHSSTTHTISSAPSTTSA) has biased composition (low complexity). 2 stretches are compositionally biased toward polar residues: residues 884-899 (SYHSSPGSTATTHFPD) and 928-970 (RSTT…TTFH). The span at 971–1007 (SSPRSPATTLSPASTTSSGVSEESTTSRSRPGSTHTT) shows a compositional bias: low complexity. The segment covering 1009 to 1021 (FPDSTTTPGLSRH) has biased composition (polar residues). Residues 1022–1065 (STTSHSSPGSTDTTLLPASTTTSGPSQESTTSHSSSGSTDTALS) are compositionally biased toward low complexity. 2 stretches are compositionally biased toward polar residues: residues 1066-1101 (PGSTTALSFGQESTTFHSNPGSTHTTLFPDSTTSSG) and 1108-1138 (RVHSSTGSPRTTLSPASSTSPGLQGESTAFQ). The span at 1139–1157 (THPASTHTTPSPPSTATAP) shows a compositional bias: low complexity. Repeat unit 6 spans residues 1159–1177 (EESTTYHRSPGSTPTTHFP). Composition is skewed to polar residues over residues 1160 to 1184 (ESTTYHRSPGSTPTTHFPASSTTSG) and 1191 to 1207 (IFHSSPDASGTTPSSAH). 3 stretches are compositionally biased toward low complexity: residues 1208-1220 (STTSGRGESTTSR), 1229-1241 (TTLPGSTTTPGLS), and 1249-1262 (SSPRSPTTTLSPAS). Composition is skewed to polar residues over residues 1271–1324 (ESTT…TTSV), 1331–1357 (TFHSRPASTHTTLFTEDSTTSGLTEES), and 1364–1377 (PASTQTGLPATLTT). Low complexity-rich tracts occupy residues 1384-1396 (STTFPSSSGSTGT) and 1411-1438 (ESTPSRLSPSSTETTTLPGSPTTPSLSE). Over residues 1439 to 1448 (KSTTFYTSPR) the composition is skewed to polar residues. Over residues 1458 to 1481 (TTTSSGVSEESSTSHSQPGSTHTT) the composition is skewed to low complexity. Residues 1466–1484 (EESSTSHSQPGSTHTTAFP) form repeat 7. A compositionally biased stretch (polar residues) spans 1483 to 1537 (FPDSTTTSDLSQEPTTSHSSQGSTEATLSPGSTTASSLGQQSTTFHSSPGDTETT). Residues 1552–1568 (STPTHSSTGSLHTTLTP) show a composition bias toward low complexity. Composition is skewed to polar residues over residues 1569–1586 (ASSTSAGLQEESTTFQSW) and 1606–1630 (VSTTYHSRPSSTPTTHFSASSTTLG). The stretch at 1633 to 1651 (EESTTVHSSPGATGTALFP) is repeat 8. Positions 1653 to 1708 (RSATSVLVGEPTTSPISSGSTETTALPGSTTTAGLSEKSTTFYSSPRSPDTTLSPA) are enriched in polar residues. The segment covering 1709 to 1724 (STTSSGVSEESTTSHS) has biased composition (low complexity). Repeat 9 spans residues 1717–1735 (EESTTSHSRPGSTHTTAFP). 2 stretches are compositionally biased toward polar residues: residues 1725–1797 (RPGS…TTAS) and 1805–1840 (PVHSSTGSPHTTLSPAGSTTRQGESTTFQSWPSSKD). N1793 carries N-linked (GlcNAc...) asparagine glycosylation. 2 stretches are compositionally biased toward low complexity: residues 1856–1877 (STTSHGSPSSTPTTHFSASSTT) and 1889–1906 (SSPVATATTPSPARSTTS). Repeat copies occupy residues 1882–1900 (EESTTVHSSPVATATTPSP) and 1910–1928 (EESTAYHSSPGSTQTMHFP). A compositionally biased stretch (polar residues) spans 1914 to 1935 (AYHSSPGSTQTMHFPESSTASG). Residues 1943 to 1959 (SHSSTTHTISSPPSTTS) show a composition bias toward low complexity. Composition is skewed to polar residues over residues 1967-1982 (SYHSSPGSTATTHFPD) and 2011-2053 (RSTT…TTFH). Over residues 2054–2082 (SSPRSPATTLSPASTTSSGVSEESTTSHS) the composition is skewed to low complexity. Repeat 12 spans residues 2075-2093 (EESTTSHSRPGSTHTTAFP). Over residues 2083–2104 (RPGSTHTTAFPDSTTTPGLSRH) the composition is skewed to polar residues. Low complexity predominate over residues 2105 to 2130 (STTSHSSPGSTDTTLLPASTTTSGPS). Polar residues-rich tracts occupy residues 2131–2184 (QEST…TSSG) and 2191–2221 (RVHSSTGSPRTTLSPASSTSPGLQGESTAFQ). The segment covering 2222–2240 (THPASTHTTPSPPSTATAP) has biased composition (low complexity). Residues 2242-2260 (EESTTYHRSPGSTPTTHFP) form repeat 13. Composition is skewed to polar residues over residues 2243-2267 (ESTTYHRSPGSTPTTHFPASSTTSG) and 2274-2290 (IFHSSPDASGTTPSSAH). Composition is skewed to low complexity over residues 2291-2303 (STTSGRGESTTSR), 2312-2324 (TTLPGSTTTPGLS), and 2332-2345 (SSPRSPTTTLSPAS). Residues 2354–2392 (ESTTSRSQPGSTHSTVSPASTTTPGLSEESTTVYSSSPG) show a composition bias toward polar residues. A compositionally biased stretch (low complexity) spans 2393–2407 (STETTVFPRTPTTSV). 2 stretches are compositionally biased toward polar residues: residues 2414–2440 (TFHSRPASTHTTLFTEDSTTSGLTEES) and 2447–2460 (PASTQTGLPATLTT). Low complexity-rich tracts occupy residues 2467–2483 (STTFPSSSGSTGTTLSP) and 2494–2521 (ESTPSRLSPSSTETTTLPGSPTTPSLSE). Residues 2522-2531 (KSTTFYTSPR) are compositionally biased toward polar residues. Positions 2541-2564 (TTTSSGVSEESSTSHSQPGSTHTT) are enriched in low complexity. Repeat unit 14 spans residues 2549-2567 (EESSTSHSQPGSTHTTAFP). The span at 2566-2578 (FPDSTTTPGLSRH) shows a compositional bias: polar residues. Over residues 2579–2604 (STTSHSSPGSTDTTLLPASTTTSGPS) the composition is skewed to low complexity. 2 stretches are compositionally biased toward polar residues: residues 2605–2658 (QEST…TSSG) and 2665–2695 (RVHSSTGSPRTTLSPASSTSPGLQGESTTFQ). Residues 2696–2714 (THPASTHTTPSPPSTATAP) show a composition bias toward low complexity. Repeat unit 15 spans residues 2716–2734 (EESTTYHRSPGSTPTTHFP). Polar residues-rich tracts occupy residues 2717–2741 (ESTTYHRSPGSTPTTHFPASSTTSG) and 2748–2764 (IFHSSPDASGTTPSSAH). 3 stretches are compositionally biased toward low complexity: residues 2765-2777 (STTSGRGESTTSR), 2786-2798 (TTLPGSTTTPGLS), and 2806-2819 (SSPRSPTTTLSPAS). 3 stretches are compositionally biased toward polar residues: residues 2828 to 2881 (ESTT…TTSV), 2888 to 2914 (TFHSRPASTHTTLFTEDSTTSGLTEES), and 2921 to 2934 (PASTQTGLPATLTT). 2 stretches are compositionally biased toward low complexity: residues 2941 to 2957 (STTFPSSSGSTGTTLSP) and 2968 to 2995 (ESTPSRLSPSSTETTTLPGSPTTPSLSE). Residues 2996–3005 (KSTTFYTSPR) show a composition bias toward polar residues. Positions 3015-3038 (TTTSSGVSEESSTSHSQPGSTHTT) are enriched in low complexity. Residues 3023–3041 (EESSTSHSQPGSTHTTAFP) form repeat 16. Residues 3040 to 3094 (FPDSTTTSGLSQEPTASHSSQGSTEATLSPGSTTASSLGQQSTTFHSSPGDTETT) are compositionally biased toward polar residues. The segment covering 3109–3125 (STPTHSSTGSLHTTLTP) has biased composition (low complexity). 2 stretches are compositionally biased toward polar residues: residues 3126-3143 (ASSTSAGLQEESTTFQSW) and 3163-3187 (VSTTYHSRPSSTPTTHFSASSTTLG). Repeat 17 spans residues 3190–3208 (EESTTVHSSPGATGTALFP). The segment covering 3210 to 3265 (RSATSVLVGEPTTSPISSGSTETTALPGSTTTAGLSEKSTTFYSSPRSPDTTLSPA) has biased composition (polar residues). Residues 3266-3281 (STTSSGVSEESTTSHS) are compositionally biased toward low complexity. Copy 18 of the repeat occupies 3274 to 3292 (EESTTSHSRPGSTHTTAFP). Polar residues-rich tracts occupy residues 3282–3354 (RPGS…TTAS) and 3362–3397 (PVHSSTGSPHTTLSPAGSTTRQGESTTFQSWPNSKD). N-linked (GlcNAc...) asparagine glycosylation occurs at N3350. 2 stretches are compositionally biased toward low complexity: residues 3413 to 3434 (STTSHGSPSSTPTTHFSASSTT) and 3446 to 3463 (SSPVATATTPSPARSTTS). Tandem repeats lie at residues 3439-3457 (EESTTVHSSPVATATTPSP) and 3467-3485 (EESTTYHSSPGSTQTMHFP). Over residues 3468-3482 (ESTTYHSSPGSTQTM) the composition is skewed to polar residues. Low complexity predominate over residues 3499–3517 (TSHSSTTHTISSAPSTTSA). Polar residues-rich tracts occupy residues 3524–3539 (SYHSSPGSTATTHFPD) and 3568–3610 (RSTT…TTFH). Positions 3611–3639 (SSPRSPATTLSPASTTSSGVSEESTTSHS) are enriched in low complexity. Copy 21 of the repeat occupies 3632 to 3650 (EESTTSHSRPGSTHTTAFP). Over residues 3640–3661 (RPGSTHTTAFPDSTTTPGLSRH) the composition is skewed to polar residues. Residues 3662–3705 (STTSHSSPGSTDTTLLPASTTTSGSSQESTTSHSSSGSTDTALS) are compositionally biased toward low complexity. Polar residues-rich tracts occupy residues 3706–3741 (PGSTTALSFGQESTTFHSSPGSTHTTLFPDSTTSSG) and 3748–3778 (RVHSSTGSPRTTLSPASSTSPGLQGESTAFQ). Low complexity predominate over residues 3779 to 3797 (THPASTHTTPSPPSTATAP). The stretch at 3799-3817 (EESTTYHRSPGSTPTTHFP) is repeat 22. 2 stretches are compositionally biased toward polar residues: residues 3800–3824 (ESTTYHRSPGSTPTTHFPASSTTSG) and 3831–3847 (IFHSSPDASGTTPSSAH). Composition is skewed to low complexity over residues 3848 to 3860 (STTSGRGESTTSR), 3869 to 3881 (TTLPGSTTTPGLS), and 3889 to 3902 (SSPRSPTTTLSPAS). 3 stretches are compositionally biased toward polar residues: residues 3911-3963 (ESTT…TTTS), 3971-3997 (TFHSRPASTHTTLFTEDSTTSGLTEES), and 4004-4017 (PASTQTGLPATLTT). Composition is skewed to low complexity over residues 4024-4036 (STTFPSSSGSTGT) and 4051-4078 (ESTPSRLSPSSTETTTLPGSPTTPSLSE). The segment covering 4079-4088 (KSTTFYTSPR) has biased composition (polar residues). A compositionally biased stretch (low complexity) spans 4098-4121 (TTTSSGVSEESSTSHSQPGSTHTT). Copy 23 of the repeat occupies 4106 to 4124 (EESSTSHSQPGSTHTTAFP). The segment covering 4123 to 4177 (FPDSTTTSGLSQEPTTSHSSQGSTEATLSPGSTTASSLGQQSTTFHSSPGDTETT) has biased composition (polar residues). Over residues 4192-4208 (STPTHSSTGSLHTTLTP) the composition is skewed to low complexity. Positions 4209–4226 (ASSTSTGLQEESTTFQSW) are enriched in polar residues. Positions 4227–4249 (PSSSDTTPSPPSTTAVPVEVSTT) are enriched in low complexity. The segment covering 4250-4270 (YHSRPSSTPTTHFSASSTTLG) has biased composition (polar residues). Repeat 24 spans residues 4273–4291 (EESTTVHSSPGATGTALFP). Polar residues predominate over residues 4293–4348 (RSATSVLVGEPTTSPISSGSTETTALPGSTTTAGLSEKSTTFYSSPRSPDTTLSPA). Positions 4349 to 4364 (STTSSGVSEESTTSHS) are enriched in low complexity. Polar residues-rich tracts occupy residues 4369-4437 (MHTT…TTAS) and 4445-4480 (PVHSSTGSPHTTLSPAGSTTRQGESTTFQSWPNSKD). N4433 is a glycosylation site (N-linked (GlcNAc...) asparagine). Low complexity-rich tracts occupy residues 4496–4517 (STTSHGSPSSTPTTHFSASSTT) and 4529–4546 (SSPVATATTPSPARSTTS). A run of 2 repeats spans residues 4522-4540 (EESTTVHSSPVATATTPSP) and 4550-4568 (EESTTYHSSPGSTQTMHFP). Residues 4551–4571 (ESTTYHSSPGSTQTMHFPESN) show a composition bias toward polar residues. The N-linked (GlcNAc...) asparagine glycan is linked to N4571. Low complexity predominate over residues 4582–4600 (TSHSSTTHTISSAPSTTSA). Composition is skewed to polar residues over residues 4607–4622 (SYHSSPGSTATTHFPD) and 4651–4688 (RSTTSVLLGESTTSPISSGSMETTALPGSTTTPGLSEK). 2 stretches are compositionally biased toward low complexity: residues 4689–4710 (STTFHSSPSSTPTTHFSASSTT) and 4722–4739 (SSPVATATTPSPARSTTS). Tandem repeats lie at residues 4715–4733 (EESTTVHSSPVATATTPSP) and 4743–4761 (EESTAYHSSPGSTQTMHFP). A compositionally biased stretch (polar residues) spans 4747–4768 (AYHSSPGSTQTMHFPESSTASG). Residues 4776–4792 (SHSSTTHTISSPPSTTS) are compositionally biased toward low complexity. Composition is skewed to polar residues over residues 4800–4814 (SYHSSPGSIATTHFP) and 4887–4917 (SSRSPDQTLSPASMTSSSISGEPTSLYSQAE). Residues 4918 to 4931 (STHTTAFPASTTTS) show a composition bias toward low complexity. Polar residues-rich tracts occupy residues 4932–5024 (GLSQ…STPF) and 5048–5061 (STAFHSSSDATGTT). The segment covering 5094 to 5112 (SSSTSGLTEESTTFHTSPS) has biased composition (low complexity). Positions 5116 to 5154 (TIVSTESLETLAPGLCQEGQIWNGKQCVCPQGYVGYQCL) constitute an EGF-like domain. C5144 and C5153 are joined by a disulfide. Positions 5168–5275 (LNATLGMTVK…TRTTLLDPDS (108 aa)) constitute an SEA domain. N-linked (GlcNAc...) asparagine glycosylation is found at N5169, N5182, N5197, N5228, and N5264. Positions 5226-5233 (LLNGSIVV) match the Cleavage motif motif. Residues 5381–5401 (GIVGAVMAVLLLALIILIILF) form a helical membrane-spanning segment. Over 5402–5478 (SLSQRKRHRE…QRPEMVASTV (77 aa)) the chain is Cytoplasmic.

As to expression, ubiquitous, with higher expression in colon. Down-regulated in colorectal cancer as well as in the colon of patients with ulcerative colitis (UC) and Crohn's disease (CD).

It is found in the membrane. Involved in epithelial cell protection, adhesion modulation, and signaling. May be involved in epithelial cell growth regulation. Stimulated by both cytokine TNF-alpha and TGF-beta in intestinal epithelium. This chain is Mucin-12 (MUC12), found in Homo sapiens (Human).